A 380-amino-acid polypeptide reads, in one-letter code: N-acetylaspartylglutamate synthase A (380 aa).

An ATP-grasp domain is found at 115-300 (FQELAGHGVP…VGAIIADYAM (186 aa)). ATP is bound by residues Lys-154, 189-199 (QKYVKESHGKD), and Arg-215. Mg(2+)-binding residues include Asp-260, Glu-273, and Asn-275. Mn(2+)-binding residues include Asp-260, Glu-273, and Asn-275. Ser-319 bears the Phosphoserine mark. Positions 345 to 370 (GSTSSESEPELGEARDSSVKTMGAPP) are disordered.

The protein belongs to the RimK family. Mg(2+) serves as cofactor. Requires Mn(2+) as cofactor. Highly expressed in spinal cord and brain.

It localises to the cytoplasm. It carries out the reaction N-acetyl-L-aspartate + L-glutamate + ATP = N-acetyl-L-aspartyl-L-glutamate + ADP + phosphate + H(+). The enzyme catalyses N-acetyl-L-aspartate + 2 L-glutamate + 2 ATP = N-acetyl-L-aspartyl-L-glutamyl-L-glutamate + 2 ADP + 2 phosphate + 2 H(+). Functionally, catalyzes the synthesis of N-acetyl-L-aspartyl-L-glutamate (NAAG) and N-acetyl-L-aspartyl-L-glutamyl-L-glutamate. This chain is N-acetylaspartylglutamate synthase A (Rimkla), found in Mus musculus (Mouse).